Here is a 329-residue protein sequence, read N- to C-terminus: MMSNSSSEIDVVKTRIPTYDEDDDTILYAYETKPEFVNKEPNIVSDASCNTEEQLKTVNDVLIHCQVIYDAMQNLDKKIDVIRRKVSKIQRFHARSLWTNRKRYGYKKYSYRLAKKLKLQKMKKNEVYESFSYPESYSPTLPVSRRENNSPSNLPRPSFCMEEYQPAEPEEDPILSRTPSPVHPSDFSEHNYQPYYASDGAMYGSSSGPCLGNPRADSIHNTYSTDHASAAPPSVTRSPFENDCYIKEGSITKHPSTWSVEAVVLFLKQTDPVALCPLVDLFRSHEIDGKALLLLTSDVLLKHLGVKLGTAVKLCYYIDRLKQGKCFEN.

Residues 136–160 form a disordered region; the sequence is SYSPTLPVSRRENNSPSNLPRPSFC. Phosphoserine is present on residues S138 and S238. Residues 258–325 form the SAM domain; the sequence is WSVEAVVLFL…YYIDRLKQGK (68 aa).

This sequence belongs to the SCM family.

Its subcellular location is the nucleus. Its function is as follows. Putative Polycomb group (PcG) protein. PcG proteins act by forming multiprotein complexes, which are required to maintain the transcriptionally repressive state of homeotic genes throughout development. May be involved in spermatogenesis during sexual maturation. The chain is Sex comb on midleg-like protein 1 (SCML1) from Pongo pygmaeus (Bornean orangutan).